The sequence spans 211 residues: Thymidylate kinase (211 aa).

ATP is bound at residue 12–19 (GIDGSGKS).

It belongs to the thymidylate kinase family.

It catalyses the reaction dTMP + ATP = dTDP + ADP. In terms of biological role, phosphorylation of dTMP to form dTDP in both de novo and salvage pathways of dTTP synthesis. The protein is Thymidylate kinase of Ruegeria pomeroyi (strain ATCC 700808 / DSM 15171 / DSS-3) (Silicibacter pomeroyi).